The chain runs to 208 residues: Probable GTP-binding protein EngB (208 aa).

The EngB-type G domain maps to 23–205 (LTSEMVVLGR…RQTLLKYLLT (183 aa)). GTP is bound by residues 31–38 (GRSNVGKS), 57–61 (GKTRL), 84–87 (DLPG), 154–157 (TKFD), and 182–184 (FNA). 2 residues coordinate Mg(2+): Ser-38 and Thr-59.

The protein belongs to the TRAFAC class TrmE-Era-EngA-EngB-Septin-like GTPase superfamily. EngB GTPase family. Requires Mg(2+) as cofactor.

Functionally, necessary for normal cell division and for the maintenance of normal septation. In Helicobacter acinonychis (strain Sheeba), this protein is Probable GTP-binding protein EngB.